The chain runs to 202 residues: Dephospho-CoA kinase (202 aa).

In terms of domain architecture, DPCK spans 6 to 202 (KISVTGDPSS…QCFKALKGTI (197 aa)). 14–19 (SSGKTE) serves as a coordination point for ATP.

The protein belongs to the CoaE family.

The protein localises to the cytoplasm. The catalysed reaction is 3'-dephospho-CoA + ATP = ADP + CoA + H(+). It functions in the pathway cofactor biosynthesis; coenzyme A biosynthesis; CoA from (R)-pantothenate: step 5/5. Its function is as follows. Catalyzes the phosphorylation of the 3'-hydroxyl group of dephosphocoenzyme A to form coenzyme A. This is Dephospho-CoA kinase from Chlamydia trachomatis serovar D (strain ATCC VR-885 / DSM 19411 / UW-3/Cx).